The following is a 374-amino-acid chain: WAT1-related protein At2g39510 (374 aa).

The next 10 membrane-spanning stretches (helical) occupy residues 9–29 (FITVVSLQFGYAGLSIIAKFA), 38–58 (VLASYRHIVATIFIAPFAYFL), 64–84 (PKMTLSIFFKILLLGLLEPTI), 99–119 (TFTAAMTNVLPAFAFIMAWIF), 135–155 (ILGTIVTVGGAMLMTVVKGPL), 182–202 (GASLIAIGCICWAGFINLQAI), 212–232 (SLTAYICFLGSIESTIVALFI), 249–269 (LAAVYGGVICSGIGYYVQGVI), 284–304 (LSMVIVAILGSIILAEVMFLG), and 306–326 (ILGAIVIVLGLYSVLWGKSKD). EamA domains are found at residues 19–147 (YAGL…GAML) and 191–320 (ICWA…YSVL). The disordered stretch occupies residues 350 to 374 (SKANAKMDTNDASVVISRPNTNESV).

Belongs to the drug/metabolite transporter (DMT) superfamily. Plant drug/metabolite exporter (P-DME) (TC 2.A.7.4) family.

It is found in the membrane. The sequence is that of WAT1-related protein At2g39510 from Arabidopsis thaliana (Mouse-ear cress).